The sequence spans 424 residues: Calreticulin (424 aa).

The signal sequence occupies residues 1 to 19 (MRLLLCLIFLVFVFNFALS). A disulfide bridge connects residues cysteine 105 and cysteine 137. The an alpha-D-glucoside site is built by tyrosine 109, lysine 111, tyrosine 128, and aspartate 135. 7 consecutive repeat copies span residues 191 to 202 (IQAGNLADDWEL), 210 to 221 (DPKQSKPVDWVD), 227 to 238 (DPEDVKPAGHDD), 246 to 256 (PEAVKPEDWNE), 260 to 270 (GEWEAPTIANP), 274 to 284 (GEWKAKKIPNP), and 288 to 298 (GEWVHPLIDNP). Residues 191 to 256 (IQAGNLADDW…EAVKPEDWNE (66 aa)) form a 4 X 12 AA approximate repeats region. The 3 X 11 AA approximate repeats stretch occupies residues 260–298 (GEWEAPTIANPEYKGEWKAKKIPNPEYKGEWVHPLIDNP). Position 318 (glutamate 318) interacts with an alpha-D-glucoside. Residues 370–385 (RKKADEKLAAEKAAEK) are compositionally biased toward basic and acidic residues. Positions 370 to 424 (RKKADEKLAAEKAAEKEAEEADEEEEEVAEEDLVKTDDKKEEVKKSTKKVDHDEL) are disordered. Over residues 386 to 400 (EAEEADEEEEEVAEE) the composition is skewed to acidic residues. Residues 401-424 (DLVKTDDKKEEVKKSTKKVDHDEL) show a composition bias toward basic and acidic residues. The short motif at 421–424 (HDEL) is the Prevents secretion from ER element.

It belongs to the calreticulin family.

It is found in the endoplasmic reticulum lumen. Its function is as follows. Molecular calcium-binding chaperone promoting folding, oligomeric assembly and quality control in the ER via the calreticulin/calnexin cycle. This lectin may interact transiently with almost all of the monoglucosylated glycoproteins that are synthesized in the ER. This Dictyostelium discoideum (Social amoeba) protein is Calreticulin (crtA).